Here is a 747-residue protein sequence, read N- to C-terminus: ATPase family gene 2 protein homolog B (747 aa).

An N-acetylmethionine modification is found at Met-1. ATP-binding positions include 234 to 241 and 500 to 507; these read GPPGVGKT and GPPGCAKT.

This sequence belongs to the AAA ATPase family. AFG2 subfamily. In terms of assembly, part of the 55LCC heterohexameric ATPase complex composed at least of AIRIM, AFG2A, AFG2B and CINP. Associates with pre-60S ribosomal particles. In adult ear, expressed at low levels in neurosensory hair cells (inner and outer) and supporting cells (pillar and Deiter cells).

Its subcellular location is the cytoplasm. It is found in the cytoskeleton. It localises to the spindle. The protein localises to the nucleus. The catalysed reaction is ATP + H2O = ADP + phosphate + H(+). With respect to regulation, in the context of 55LCC heterohexameric ATPase complex, the ATPase activity is stimulated by DNA binding and inhibited in presence of RNA. ATP-dependent chaperone part of the 55LCC heterohexameric ATPase complex which is chromatin-associated and promotes replisome proteostasis to maintain replication fork progression and genome stability. Required for replication fork progression, sister chromatid cohesion, and chromosome stability. The ATPase activity is specifically enhanced by replication fork DNA and is coupled to cysteine protease-dependent cleavage of replisome substrates in response to replication fork damage. Uses ATPase activity to process replisome substrates in S-phase, facilitating their proteolytic turnover from chromatin to ensure DNA replication and mitotic fidelity. Plays an essential role in the cytoplasmic maturation steps of pre-60S ribosomal particles by promoting the release of shuttling protein RSL24D1/RLP24 from the pre-ribosomal particles. The chain is ATPase family gene 2 protein homolog B (Afg2b) from Mus musculus (Mouse).